Reading from the N-terminus, the 212-residue chain is MKFRSDSSGGDEPRAPAAGDGGGGGDEPAKRQRTDPSSSSSQGEASSSSQPPPQQQQEEQPPEDAGEGEQPRVPDLGEDLVFEVLRRAEARTLAAAACVSRGWRQLAEDERLWEAACVREWANLGFSERQLRAVVLSLGGFRRLHAVYIRPLQWRGAGVPRQQGRRQPPVRLGRDQVQLSLSLFSIGFFQNMPCPKKDKGNDSDKNGGGQCG.

Positions 1–74 are disordered; sequence MKFRSDSSGG…AGEGEQPRVP (74 aa). Low complexity predominate over residues 35–59; sequence DPSSSSSQGEASSSSQPPPQQQQEE. Residues 70 to 116 form the F-box domain; sequence QPRVPDLGEDLVFEVLRRAEARTLAAAACVSRGWRQLAEDERLWEAA.

In terms of assembly, part of some SCF(GID2) complex, which consist of a SKP1 protein, CUL1, GID2 and some RING box protein. Interacts directly with SKP2 and SKP15. Interacts directly with DELLA protein SLR1. May have a higher affinity for phosphorylated SLR1 proteins. Widely expressed. Preferentially expressed in unopened flowers, shoot apices and elongation stem. Expressed at lower level in the leaf blades, leaf sheaths, roots and rachis.

The protein localises to the nucleus. It participates in protein modification; protein ubiquitination. Essential component of some SCF-type E3 ligase complex that positively regulates the gibberellin signaling pathway. Upon gibberellin treatment, the complex mediates the ubiquitination and subsequent degradation of DELLA protein SLR1, a repressor of the gibberellin pathway, leading to activate the pathway. In Oryza sativa subsp. japonica (Rice), this protein is F-box protein GID2 (GID2).